A 365-amino-acid polypeptide reads, in one-letter code: NAC domain-containing protein 37 (365 aa).

The 150-residue stretch at 9–158 (VPPGFRFHPT…GWVVCRAFKK (150 aa)) folds into the NAC domain. Residues 109–164 (IGMRKTLVFYKGRAPNGKKSDWIMHEYRLESDENAPPQEEGWVVCRAFKKRATGQA) mediate DNA binding.

Belongs to the plant vascular related NAC-domain protein family. As to quaternary structure, interacts with NAC030/VND7. In terms of tissue distribution, expressed in root metaxylem pole and in shoot pre-procambium and procambium. Present in root developing xylems. Specifically expressed in vessels but not in interfascicular fibers in stems.

Its subcellular location is the nucleus. Transcription activator that binds to the secondary wall NAC binding element (SNBE), 5'-(T/A)NN(C/T)(T/C/G)TNNNNNNNA(A/C)GN(A/C/T)(A/T)-3', in the promoter of target genes. Involved in xylem formation by promoting the expression of secondary wall-associated transcription factors and of genes involved in secondary wall biosynthesis and programmed cell death, genes driven by the secondary wall NAC binding element (SNBE). Triggers thickening of secondary walls. This chain is NAC domain-containing protein 37, found in Arabidopsis thaliana (Mouse-ear cress).